We begin with the raw amino-acid sequence, 333 residues long: Cytochrome f (333 aa).

Residues 1–44 (MRNACTRARLTRTARAMVKTLFIAIASVTFFFTSDLALPQSAAA) form the signal peptide. Heme contacts are provided by Y45, C66, C69, and H70. Residues 299-318 (VGWLIAFVALVMLAQVMLVL) form a helical membrane-spanning segment.

This sequence belongs to the cytochrome f family. In terms of assembly, the 4 large subunits of the cytochrome b6-f complex are cytochrome b6, subunit IV (17 kDa polypeptide, PetD), cytochrome f and the Rieske protein, while the 4 small subunits are PetG, PetL, PetM and PetN. The complex functions as a dimer. It depends on heme as a cofactor.

The protein resides in the cellular thylakoid membrane. Functionally, component of the cytochrome b6-f complex, which mediates electron transfer between photosystem II (PSII) and photosystem I (PSI), cyclic electron flow around PSI, and state transitions. This Trichormus variabilis (strain ATCC 29413 / PCC 7937) (Anabaena variabilis) protein is Cytochrome f.